A 278-amino-acid chain; its full sequence is ADP-dependent (S)-NAD(P)H-hydrate dehydratase (278 aa).

Positions 4–276 constitute a YjeF C-terminal domain; sequence DDDLVRQVIR…KAIPSWMKKL (273 aa). The (6S)-NADPHX site is built by Ala-39, Gly-102, and His-152. Residue Gly-216 participates in AMP binding. Position 217 (Asp-217) interacts with (6S)-NADPHX.

It belongs to the NnrD/CARKD family. Homotetramer. Requires Mg(2+) as cofactor.

It carries out the reaction (6S)-NADHX + ADP = AMP + phosphate + NADH + H(+). It catalyses the reaction (6S)-NADPHX + ADP = AMP + phosphate + NADPH + H(+). In terms of biological role, catalyzes the dehydration of the S-form of NAD(P)HX at the expense of ADP, which is converted to AMP. Together with NAD(P)HX epimerase, which catalyzes the epimerization of the S- and R-forms, the enzyme allows the repair of both epimers of NAD(P)HX, a damaged form of NAD(P)H that is a result of enzymatic or heat-dependent hydration. The polypeptide is ADP-dependent (S)-NAD(P)H-hydrate dehydratase (Streptococcus thermophilus).